The primary structure comprises 494 residues: Fumarate hydratase, mitochondrial (494 aa).

The N-terminal 15 residues, 1 to 15 (MLRASATRFLSQAKN), are a transit peptide targeting the mitochondrion. Residues 128 to 130 (SGT), 159 to 162 (HPND), 169 to 171 (SSN), and Thr217 each bind substrate. The active-site Proton donor/acceptor is the His218. Residue Ser348 is part of the active site. Substrate is bound by residues Ser349 and 354–356 (KVN).

It belongs to the class-II fumarase/aspartase family. Fumarase subfamily. As to quaternary structure, homotetramer.

The protein resides in the mitochondrion matrix. It localises to the cytoplasm. Its subcellular location is the nucleus. The enzyme catalyses (S)-malate = fumarate + H2O. It functions in the pathway carbohydrate metabolism; tricarboxylic acid cycle; (S)-malate from fumarate: step 1/1. Catalyzes the reversible stereospecific interconversion of fumarate to L-malate. In mitochondrion, catalyzes the hydration of fumarate to L-malate in the tricarboxylic acid (TCA) cycle to facilitate a transition step in the production of energy in the form of NADH. In cytoplasm and nucleus, involved in DNA repair in response to DNA damage: following DNA double-strand breaks (DSBs), translocates from the cytosol to the nucleus and promotes DNA repair by catalyzing the dehydration of L-malate to fumarate. The sequence is that of Fumarate hydratase, mitochondrial from Rhizopus oryzae (Mucormycosis agent).